Here is a 59-residue protein sequence, read N- to C-terminus: Ferredoxin (59 aa).

Positions 2-29 (KVSVDKDACIGCGVCASICPDVFEMDDD) constitute a 4Fe-4S ferredoxin-type domain. [4Fe-4S] cluster is bound by residues Cys-10, Cys-13, and Cys-16. Cys-20 and Cys-43 are joined by a disulfide. A [4Fe-4S] cluster-binding site is contributed by Cys-51.

[4Fe-4S] cluster serves as cofactor. It depends on [3Fe-4S] cluster as a cofactor.

Ferredoxins are iron-sulfur proteins that transfer electrons in a wide variety of metabolic reactions. The protein is Ferredoxin of Thermococcus litoralis.